The following is a 1168-amino-acid chain: Transcription-repair-coupling factor (1168 aa).

Residues 633-794 (DMQKSRPMDR…MLGVRDLSVI (162 aa)) form the Helicase ATP-binding domain. 646–653 (GDVGYGKT) serves as a coordination point for ATP. Residues 747 to 750 (DEEQ) carry the DEEQ box motif. A Helicase C-terminal domain is found at 808–969 (VLEQNMSFIK…GFKIAMRDLN (162 aa)).

The protein in the N-terminal section; belongs to the UvrB family. It in the C-terminal section; belongs to the helicase family. RecG subfamily.

It is found in the cytoplasm. In terms of biological role, couples transcription and DNA repair by recognizing RNA polymerase (RNAP) stalled at DNA lesions. Mediates ATP-dependent release of RNAP and its truncated transcript from the DNA, and recruitment of nucleotide excision repair machinery to the damaged site. The chain is Transcription-repair-coupling factor from Staphylococcus aureus (strain USA300).